The sequence spans 228 residues: MNLTLFDQFSSPNILAIPLMTISLLMLTIIFPMKHNRLLTNRLLSIQSKMIHIFTKQLMLPIPKSGHHWALILTSLMTLLLTSNLLGLLPYTFTPTTQLSMNLGFALPMWLATLLIGLRNQPTMSLAHLLPEGTPTPLIPTLILIESISLMIRPLALGVRISANLTAGHLLMQLTSSATLSLSSMPTLSFMTAILLFLLTILEMAVAMIQALVFVLLLSLYLQENTHN.

Helical transmembrane passes span 13-33 (NILAIPLMTISLLMLTIIFPM), 69-89 (WALILTSLMTLLLTSNLLGLL), 98-118 (QLSMNLGFALPMWLATLLIGL), 139-159 (IPTLILIESISLMIRPLALGV), and 194-214 (ILLFLLTILEMAVAMIQALVF).

The protein belongs to the ATPase A chain family. Component of the ATP synthase complex composed at least of ATP5F1A/subunit alpha, ATP5F1B/subunit beta, ATP5MC1/subunit c (homooctomer), MT-ATP6/subunit a, MT-ATP8/subunit 8, ATP5ME/subunit e, ATP5MF/subunit f, ATP5MG/subunit g, ATP5MK/subunit k, ATP5MJ/subunit j, ATP5F1C/subunit gamma, ATP5F1D/subunit delta, ATP5F1E/subunit epsilon, ATP5PF/subunit F6, ATP5PB/subunit b, ATP5PD/subunit d, ATP5PO/subunit OSCP. ATP synthase complex consists of a soluble F(1) head domain (subunits alpha(3) and beta(3)) - the catalytic core - and a membrane F(0) domain - the membrane proton channel (subunits c, a, 8, e, f, g, k and j). These two domains are linked by a central stalk (subunits gamma, delta, and epsilon) rotating inside the F1 region and a stationary peripheral stalk (subunits F6, b, d, and OSCP). Interacts with DNAJC30; interaction is direct.

The protein resides in the mitochondrion inner membrane. The catalysed reaction is H(+)(in) = H(+)(out). In terms of biological role, subunit a, of the mitochondrial membrane ATP synthase complex (F(1)F(0) ATP synthase or Complex V) that produces ATP from ADP in the presence of a proton gradient across the membrane which is generated by electron transport complexes of the respiratory chain. ATP synthase complex consist of a soluble F(1) head domain - the catalytic core - and a membrane F(1) domain - the membrane proton channel. These two domains are linked by a central stalk rotating inside the F(1) region and a stationary peripheral stalk. During catalysis, ATP synthesis in the catalytic domain of F(1) is coupled via a rotary mechanism of the central stalk subunits to proton translocation. With the subunit c (ATP5MC1), forms the proton-conducting channel in the F(0) domain, that contains two crucial half-channels (inlet and outlet) that facilitate proton movement from the mitochondrial intermembrane space (IMS) into the matrix. Protons are taken up via the inlet half-channel and released through the outlet half-channel, following a Grotthuss mechanism. In Pelomedusa subrufa (African side-necked turtle), this protein is ATP synthase F(0) complex subunit a.